A 144-amino-acid polypeptide reads, in one-letter code: Putative pre-16S rRNA nuclease (144 aa).

It belongs to the YqgF nuclease family.

It localises to the cytoplasm. Its function is as follows. Could be a nuclease involved in processing of the 5'-end of pre-16S rRNA. This is Putative pre-16S rRNA nuclease from Oleidesulfovibrio alaskensis (strain ATCC BAA-1058 / DSM 17464 / G20) (Desulfovibrio alaskensis).